Reading from the N-terminus, the 507-residue chain is Maturase K (507 aa).

Belongs to the intron maturase 2 family. MatK subfamily.

The protein resides in the plastid. The protein localises to the chloroplast. Functionally, usually encoded in the trnK tRNA gene intron. Probably assists in splicing its own and other chloroplast group II introns. The protein is Maturase K of Ranunculus acris (Meadow buttercup).